A 222-amino-acid polypeptide reads, in one-letter code: Interleukin-12 subunit alpha (222 aa).

Residues 1–25 (MCPLRNLLLVATLVLLNHLDHLSLG) form the signal peptide. Cystine bridges form between cysteine 40-cysteine 113, cysteine 67-cysteine 199, and cysteine 88-cysteine 126. Asparagine 42 and asparagine 96 each carry an N-linked (GlcNAc...) asparagine glycan.

Belongs to the IL-6 superfamily. Heterodimer with IL12B; disulfide-linked. This heterodimer is known as interleukin IL-12. Heterodimer with EBI3/IL27B; not disulfide-linked. This heterodimer is known as interleukin IL-35. Interacts with NBR1; this interaction promotes IL-12 secretion.

The protein localises to the secreted. Its function is as follows. Heterodimerizes with IL12B to form the IL-12 cytokine or with EBI3/IL27B to form the IL-35 cytokine. IL-12 is primarily produced by professional antigen-presenting cells (APCs) such as B-cells and dendritic cells (DCs) as well as macrophages and granulocytes and regulates T-cell and natural killer-cell responses, induces the production of interferon-gamma (IFN-gamma), favors the differentiation of T-helper 1 (Th1) cells and is an important link between innate resistance and adaptive immunity. Mechanistically, exerts its biological effects through a receptor composed of IL12R1 and IL12R2 subunits. Binding to the receptor results in the rapid tyrosine phosphorylation of a number of cellular substrates including the JAK family kinases TYK2 and JAK2. In turn, recruited STAT4 gets phosphorylated and translocates to the nucleus where it regulates cytokine/growth factor responsive genes. As part of IL-35, plays essential roles in maintaining the immune homeostasis of the liver microenvironment and also functions as an immune-suppressive cytokine. Mediates biological events through unconventional receptors composed of IL12RB2 and gp130/IL6ST heterodimers or homodimers. Signaling requires the transcription factors STAT1 and STAT4, which form a unique heterodimer that binds to distinct DNA sites. In Sus scrofa (Pig), this protein is Interleukin-12 subunit alpha (IL12A).